The sequence spans 257 residues: NAD kinase (257 aa).

D46 functions as the Proton acceptor in the catalytic mechanism. NAD(+) is bound by residues 46-47 (DG), 116-117 (NE), D146, A154, 157-162 (TAYNLS), and N218.

The protein belongs to the NAD kinase family. It depends on a divalent metal cation as a cofactor.

The protein localises to the cytoplasm. It carries out the reaction NAD(+) + ATP = ADP + NADP(+) + H(+). Its function is as follows. Involved in the regulation of the intracellular balance of NAD and NADP, and is a key enzyme in the biosynthesis of NADP. Catalyzes specifically the phosphorylation on 2'-hydroxyl of the adenosine moiety of NAD to yield NADP. In Brucella melitensis biotype 1 (strain ATCC 23456 / CCUG 17765 / NCTC 10094 / 16M), this protein is NAD kinase.